Consider the following 977-residue polypeptide: Receptor protein-tyrosine kinase CEPR2 (977 aa).

The N-terminal stretch at 1-31 (MSRRPDLLRGSVVATVAATFLLFIFPPNVES) is a signal peptide. The Extracellular segment spans residues 32–620 (TVEKQALFRF…NVKRNSSLDG (589 aa)). An N-linked (GlcNAc...) asparagine glycan is attached at Asn-85. 20 LRR repeats span residues 97–121 (LTKL…IVNC), 122–146 (KNLK…PLKS), 148–167 (EILD…WIGN), 168–192 (MNQL…SIGG), 193–217 (LKKL…IFDL), 219–241 (ALDT…ISRL), 242–265 (VNLT…IKNL), 266–288 (TRLR…ELGV), 290–312 (KELR…GFGD), 313–338 (LSHL…GRFS), 340–361 (LDTV…LCQN), 363–385 (KLQF…YGEC), 386–409 (KSLL…FWSL), 411–433 (LAKM…IGLS), 434–457 (TELS…LGRL), 458–481 (TNIE…VGDL), 482–504 (KELS…ELKN), 506–529 (VKLV…LSQI), 530–553 (ASLN…LVKL), and 555–576 (LSFI…LLAV). Asn-128 is a glycosylation site (N-linked (GlcNAc...) asparagine). An N-linked (GlcNAc...) asparagine glycan is attached at Asn-205. N-linked (GlcNAc...) asparagine glycans are attached at residues Asn-243, Asn-251, and Asn-264. Asn-301 and Asn-325 each carry an N-linked (GlcNAc...) asparagine glycan. Asn-469 and Asn-491 each carry an N-linked (GlcNAc...) asparagine glycan. An N-linked (GlcNAc...) asparagine glycan is attached at Asn-615. Residues 621 to 641 (TLLFLALAIVVVVLVSGLFAL) form a helical membrane-spanning segment. Over 642 to 977 (RYRVVKIREL…SQDTTGKITV (336 aa)) the chain is Cytoplasmic. Residues 683-965 (LDEDHVIGSG…RKLDDADPCV (283 aa)) form the Protein kinase domain. Residues 689–697 (IGSGSAGKV) and Lys-712 contribute to the ATP site. Tyr-801 carries the post-translational modification Phosphotyrosine. Asp-814 functions as the Proton acceptor in the catalytic mechanism. A Phosphoserine modification is found at Ser-846. Phosphotyrosine occurs at positions 854 and 861.

This sequence belongs to the protein kinase superfamily. Ser/Thr protein kinase family. As to quaternary structure, interacts with the root-derived peptide CEP1. Binds to the ammonium transporter AMT1-1. In terms of tissue distribution, expressed in mature leaves, primary roots, and the root tips of both primary and lateral roots.

It is found in the cell membrane. The enzyme catalyses L-tyrosyl-[protein] + ATP = O-phospho-L-tyrosyl-[protein] + ADP + H(+). Receptor kinase involved in the perception of C-terminally encoded plant signaling peptide (CEP) and subsequent regulation of root and shoot development. Together with CEPR1, mediates systemic nitrogen (N)-demand signaling upon the perception of root-derived peptides (e.g. CEP1) via the up-regulation of genes involved in N uptake and assimilation pathways. The sequence is that of Receptor protein-tyrosine kinase CEPR2 from Arabidopsis thaliana (Mouse-ear cress).